The chain runs to 281 residues: Formamidopyrimidine-DNA glycosylase (281 aa).

Catalysis depends on Pro2, which acts as the Schiff-base intermediate with DNA. The active-site Proton donor is the Glu3. The Proton donor; for beta-elimination activity role is filled by Lys58. DNA-binding residues include His94, Arg113, and Arg156. An FPG-type; degenerate zinc finger spans residues 241–281 (AVYDRVGQPCPGCDCDVARTGGIERMVQSGRSTFFCGRRQR). Arg271 serves as the catalytic Proton donor; for delta-elimination activity.

This sequence belongs to the FPG family. In terms of assembly, monomer. Zn(2+) is required as a cofactor.

The catalysed reaction is Hydrolysis of DNA containing ring-opened 7-methylguanine residues, releasing 2,6-diamino-4-hydroxy-5-(N-methyl)formamidopyrimidine.. The enzyme catalyses 2'-deoxyribonucleotide-(2'-deoxyribose 5'-phosphate)-2'-deoxyribonucleotide-DNA = a 3'-end 2'-deoxyribonucleotide-(2,3-dehydro-2,3-deoxyribose 5'-phosphate)-DNA + a 5'-end 5'-phospho-2'-deoxyribonucleoside-DNA + H(+). Functionally, involved in base excision repair of DNA damaged by oxidation or by mutagenic agents. Acts as a DNA glycosylase that recognizes and removes damaged bases. Has a preference for oxidized purines, such as 7,8-dihydro-8-oxoguanine (8-oxoG). Has AP (apurinic/apyrimidinic) lyase activity and introduces nicks in the DNA strand. Cleaves the DNA backbone by beta-delta elimination to generate a single-strand break at the site of the removed base with both 3'- and 5'-phosphates. The protein is Formamidopyrimidine-DNA glycosylase of Rhodospirillum rubrum (strain ATCC 11170 / ATH 1.1.1 / DSM 467 / LMG 4362 / NCIMB 8255 / S1).